Reading from the N-terminus, the 243-residue chain is Proteasome subunit beta (243 aa).

Residues 1-49 (MRTPTGDLSDGPAEELGRDQPVFGPEIGEFEHSERRAAQADGEGEMKTG) constitute a propeptide, removed in mature form; by autocatalysis. The interval 1–50 (MRTPTGDLSDGPAEELGRDQPVFGPEIGEFEHSERRAAQADGEGEMKTGT) is disordered. Positions 29 to 38 (EFEHSERRAA) are enriched in basic and acidic residues. Catalysis depends on Thr50, which acts as the Nucleophile.

It belongs to the peptidase T1B family. In terms of assembly, the 20S proteasome core is composed of 14 alpha and 14 beta subunits that assemble into four stacked heptameric rings, resulting in a barrel-shaped structure. The two inner rings, each composed of seven catalytic beta subunits, are sandwiched by two outer rings, each composed of seven alpha subunits. The catalytic chamber with the active sites is on the inside of the barrel. Has a gated structure, the ends of the cylinder being occluded by the N-termini of the alpha-subunits. Is capped at one or both ends by the proteasome regulatory ATPase, PAN.

The protein resides in the cytoplasm. It catalyses the reaction Cleavage of peptide bonds with very broad specificity.. The formation of the proteasomal ATPase PAN-20S proteasome complex, via the docking of the C-termini of PAN into the intersubunit pockets in the alpha-rings, triggers opening of the gate for substrate entry. Interconversion between the open-gate and close-gate conformations leads to a dynamic regulation of the 20S proteasome proteolysis activity. In terms of biological role, component of the proteasome core, a large protease complex with broad specificity involved in protein degradation. This Halorubrum lacusprofundi (strain ATCC 49239 / DSM 5036 / JCM 8891 / ACAM 34) protein is Proteasome subunit beta.